The sequence spans 278 residues: Large ribosomal subunit protein uL2 (278 aa).

Disordered regions lie at residues 32-54 (SLCRPLKKSGGRNNNGRITTRHI) and 221-278 (RGMT…RNAK). Residues 232 to 245 (NGGGEGKSKSGGGR) are compositionally biased toward gly residues.

The protein belongs to the universal ribosomal protein uL2 family. Part of the 50S ribosomal subunit. Forms a bridge to the 30S subunit in the 70S ribosome.

One of the primary rRNA binding proteins. Required for association of the 30S and 50S subunits to form the 70S ribosome, for tRNA binding and peptide bond formation. It has been suggested to have peptidyltransferase activity; this is somewhat controversial. Makes several contacts with the 16S rRNA in the 70S ribosome. The polypeptide is Large ribosomal subunit protein uL2 (Akkermansia muciniphila (strain ATCC BAA-835 / DSM 22959 / JCM 33894 / BCRC 81048 / CCUG 64013 / CIP 107961 / Muc)).